The chain runs to 321 residues: Thioredoxin reductase tcpT (321 aa).

FAD-binding positions include 14–17 (GGPA), 36–41 (DSGRYR), H49, and A114. C138 and C141 are oxidised to a cystine. Residues D282 and 289–290 (NV) each bind FAD.

Belongs to the class-II pyridine nucleotide-disulfide oxidoreductase family. Homodimer. The cofactor is FAD.

Its pathway is secondary metabolite biosynthesis. Functionally, thioredoxin reductase; part of the gene cluster that mediates the biosynthesis of an unusual class of epipolythiodioxopiperazines (ETPs) lacking the reactive thiol group important for toxicity. Firstly, L-tyrosine is prenylated by tcpD, before undergoing condensation with L-glycine in a reaction catalyzed by the NRPS tcpP leading to the diketopiperazine (DKP) backbone. Afterwards the alpha-carbon of tyrosine is oxidized by the cytochrome P450 tcpC to form a hydroxyl group. However, in contrast other ETP biosynthesis pathways studied so far, tcpC is not able to bishydroxylate the DKP at both alpha-carbon positions, but hydroxylates the alpha-carbon of the tyrosine part and the nitrogen of the glycine part. The next steps involve an alpha,beta-elimination reaction catalyzed by tcpI, a methylation by the methyltransferase tcpN the action of the four enzyme cascade tcpG/K/J/I. Due to a dysfunctional cytochrome P450 monooxygenase tcpC, the pathway leads to the biosynthesis of probable non-toxic metabolites lacking the reactive thiol group. The sequence is that of Thioredoxin reductase tcpT from Claviceps purpurea (strain 20.1) (Ergot fungus).